Reading from the N-terminus, the 481-residue chain is Ribosomal protein uS12 methylthiotransferase RimO (481 aa).

Positions 8–124 (MTVHLVSMGC…IAGRLRTILD (117 aa)) constitute an MTTase N-terminal domain. [4Fe-4S] cluster is bound by residues Cys-17, Cys-53, and Cys-87. The tract at residues 148 to 188 (PTARAEVSVPGHGTAPDLSASVTPDSGPRATRRRLGTGPSA) is disordered. In terms of domain architecture, Radical SAM core spans 182-413 (LGTGPSAPLK…DLTDELVSQR (232 aa)). [4Fe-4S] cluster-binding residues include Cys-196, Cys-200, and Cys-203. In terms of domain architecture, TRAM spans 415–480 (EDRIGTRGRV…GVDLVARPAN (66 aa)).

Belongs to the methylthiotransferase family. RimO subfamily. [4Fe-4S] cluster serves as cofactor.

It is found in the cytoplasm. It carries out the reaction L-aspartate(89)-[ribosomal protein uS12]-hydrogen + (sulfur carrier)-SH + AH2 + 2 S-adenosyl-L-methionine = 3-methylsulfanyl-L-aspartate(89)-[ribosomal protein uS12]-hydrogen + (sulfur carrier)-H + 5'-deoxyadenosine + L-methionine + A + S-adenosyl-L-homocysteine + 2 H(+). In terms of biological role, catalyzes the methylthiolation of an aspartic acid residue of ribosomal protein uS12. The polypeptide is Ribosomal protein uS12 methylthiotransferase RimO (Cutibacterium acnes (strain DSM 16379 / KPA171202) (Propionibacterium acnes)).